The chain runs to 373 residues: Leucine aminopeptidase 1 (373 aa).

An N-terminal signal peptide occupies residues 1-18 (MKFISVLALGATATSVLG). 2 residues coordinate Zn(2+): His176 and Asp195. N-linked (GlcNAc...) asparagine glycosylation occurs at Asn196. Positions 234 and 261 each coordinate Zn(2+). Asn286 carries an N-linked (GlcNAc...) asparagine glycan. Residues Cys310 and Cys314 are joined by a disulfide bond. His343 is a binding site for Zn(2+).

The protein belongs to the peptidase M28 family. M28E subfamily. In terms of assembly, monomer. Zn(2+) serves as cofactor.

Its subcellular location is the secreted. Functionally, extracellular aminopeptidase which contributes to pathogenicity. This chain is Leucine aminopeptidase 1 (LAP1), found in Arthroderma otae (strain ATCC MYA-4605 / CBS 113480) (Microsporum canis).